Here is a 118-residue protein sequence, read N- to C-terminus: Alpha-amylase inhibitor 4 (118 aa).

4 disulfides stabilise this stretch: Cys-7–Cys-60, Cys-21–Cys-49, Cys-30–Cys-82, and Cys-50–Cys-101.

It belongs to the protease inhibitor I6 (cereal trypsin/alpha-amylase inhibitor) family.

Its subcellular location is the secreted. In terms of biological role, alpha-amylase inhibitor. The polypeptide is Alpha-amylase inhibitor 4 (Sorghum bicolor (Sorghum)).